Reading from the N-terminus, the 886-residue chain is Translation initiation factor IF-2 (886 aa).

Disordered stretches follow at residues 46–91 and 121–297; these read LDHL…VEVR and EQQK…HGFT. Residues 72-82 show a composition bias toward polar residues; that stretch reads STLSVTGSTGK. Composition is skewed to basic and acidic residues over residues 130 to 163, 175 to 239, and 246 to 260; these read AELK…AERK, AKSE…DHHL, and REAE…EQGT. The tr-type G domain maps to 386-555; it reads PRAPVVTVMG…LNQSELLELT (170 aa). The G1 stretch occupies residues 395 to 402; the sequence is GHVDHGKT. 395 to 402 contributes to the GTP binding site; that stretch reads GHVDHGKT. A G2 region spans residues 420 to 424; it reads GITQH. The interval 441 to 444 is G3; it reads DTPG. GTP contacts are provided by residues 441–445 and 495–498; these read DTPGH and NKMD. The segment at 495 to 498 is G4; it reads NKMD. Positions 531-533 are G5; sequence SAK.

It belongs to the TRAFAC class translation factor GTPase superfamily. Classic translation factor GTPase family. IF-2 subfamily.

It localises to the cytoplasm. One of the essential components for the initiation of protein synthesis. Protects formylmethionyl-tRNA from spontaneous hydrolysis and promotes its binding to the 30S ribosomal subunits. Also involved in the hydrolysis of GTP during the formation of the 70S ribosomal complex. This Pseudoalteromonas translucida (strain TAC 125) protein is Translation initiation factor IF-2.